The sequence spans 140 residues: FlaA locus uncharacterized protein YlxG (140 aa).

Positions 1-21 (MTSISSEYKLPEKTNTVSTNN) are disordered.

This sequence belongs to the FlgD family.

The protein is FlaA locus uncharacterized protein YlxG (ylxG) of Bacillus subtilis (strain 168).